A 622-amino-acid chain; its full sequence is MSTDNKQSLRAITLAAIGVVYGDIGTSPLYTLRECLSGQFGFGVERDAVFGFLSLIFWLLILVVSLKYLSFVMRADNAGEGGILTLMSLAGRNTSARMTSFLVIIGLIGGSFFYGEVVITPAISVLSAIEGLEIIAPQLDTWVVPLAIIVLTLLFAIQKHGTGLVGKLFAPIMLAWFLILAALGLRGIMGNPEVLQALNPIWAVHFFLEYKTVSFVALGAVVLSITGVEALYADMGHFGKLPIRLAWFTVVLPSLVLNYFGQGALLLKNPEAIKNPFFLLAPDWALVPMLIIATLATVIASQAVISGVFSLTRQAVRLGYLSPMRIIHTSEMESGQIYIPFINWLLYVAVVIVIVSFEHSSNLAAAYGIAVTGTMVLTSILSTTVAYRNWHWNKFLVALILVGLLCIDLPLFSANLDKIVSGGWLPLTLGLVMFIVMTTWKSERFRLLRRMHEHGNSLEAMIASLEKSPPVRVPGTAVYMSRAQKVIPFALMHNLKHNKVLHERVILLTLRTEDAPYVHNVRRVQIEQLSPTFWRVVASYGWRETPNVEEVFHRCGLEGLSCRMMETSFFMSHESLIVGKRPWYLRLRGKLYLILQRNALRAPDQFEIPPNRVIELGTQVEI.

The next 12 helical transmembrane spans lie at 12-32 (ITLA…LYTL), 49-69 (VFGF…LKYL), 101-121 (FLVI…VITP), 134-154 (IIAP…LTLL), 163-183 (GLVG…LAAL), 213-233 (VSFV…ALYA), 247-267 (WFTV…ALLL), 276-296 (PFFL…ATLA), 337-357 (IYIP…IVSF), 363-383 (LAAA…ILST), 395-415 (FLVA…FSAN), and 419-439 (IVSG…VMTT).

The protein belongs to the HAK/KUP transporter (TC 2.A.72) family.

The protein resides in the cell inner membrane. The catalysed reaction is K(+)(in) + H(+)(in) = K(+)(out) + H(+)(out). In terms of biological role, responsible for the low-affinity transport of potassium into the cell. Likely operates as a K(+):H(+) symporter. This is Low affinity potassium transport system protein Kup from Enterobacter sp. (strain 638).